The chain runs to 384 residues: Isoafricanol synthase (384 aa).

Asp95, Asn245, Ser249, and Glu253 together coordinate Mg(2+).

The protein belongs to the terpene synthase family. Mg(2+) is required as a cofactor.

It carries out the reaction (2E,6E)-farnesyl diphosphate + H2O = (+)-isoafricanol + diphosphate. Catalyzes the cyclization of farnesyl diphosphate (FPP) to isoafricanol. The chain is Isoafricanol synthase from Streptomyces violaceusniger (strain Tu 4113).